The chain runs to 422 residues: SPbeta prophage-derived glycosyltransferase SunS (422 aa).

This sequence belongs to the glycosyltransferase 2 family.

In terms of biological role, transfers a hexose moiety onto 'Cys-41' of bacteriocin sublancin-168 (SunA). Accepts UDP-glucose (UDP-Glc), UDP-N-acetylglucosamine (UDP-GlcNAc), UDP-galactose (UDP-Gal), UDP-xylose (UDP-Xyl) and GDP-mannose as substrate. The sequence is that of SPbeta prophage-derived glycosyltransferase SunS (sunS) from Bacillus subtilis (strain 168).